The chain runs to 2726 residues: Filamin-C (2726 aa).

The segment at 1–260 (MMNNSNYSDA…VMTYLSQFPK (260 aa)) is actin-binding. S5 bears the Phosphoserine mark. Calponin-homology (CH) domains follow at residues 37–143 (KIQQ…LHYS) and 160–263 (QTPK…KAKL). Filamin repeat units follow at residues 271 to 369 (SKQL…EVNV), 371 to 469 (MALG…PVHV), 470 to 566 (AEAC…EVQV), 567 to 659 (SPEA…IAHI), 663 to 759 (PPDC…RVNV), 760 to 862 (GEGS…HIKV), 863 to 961 (DPSH…VVNV), 962 to 1057 (APPL…AVEG), 1058 to 1150 (VLPP…KATI), 1151 to 1245 (QPVF…RVHV), 1246 to 1345 (QPAV…RVGV), 1346 to 1438 (TEGC…RVPV), 1439 to 1534 (KDVV…KIKV), 1535 to 1631 (LPAH…RIHA), and 1636 to 1735 (DASK…HVLA). The residue at position 1003 (R1003) is an Omega-N-methylarginine. Residues S1162 and S1339 each carry the phosphoserine modification. The tract at residues 1736–1759 (CDPLPHVEEPAEVLQLHQPYAPLR) is hinge 1. Filamin repeat units lie at residues 1760 to 1854 (PGTC…LQFY), 1855 to 1947 (VDAI…TAKI), 1948 to 2034 (TGDD…KILV), and 2037 to 2129 (SEIG…TVKV). S2043 is modified (phosphoserine). An intradomain insert; mediate targeting to Z lines region spans residues 2163 to 2244 (GNWFQMVSAQ…FGSITRQQEG (82 aa)). Residues 2194 to 2210 (ISKTRGGETKREVRVEE) show a composition bias toward basic and acidic residues. The disordered stretch occupies residues 2194-2214 (ISKTRGGETKREVRVEESTQV). 2 positions are modified to phosphoserine: S2234 and S2237. At T2239 the chain carries Phosphothreonine. Positions 2241–2260 (QQEGEASSQDMTAQVTSPSG) are enriched in polar residues. The segment at 2241–2261 (QQEGEASSQDMTAQVTSPSGK) is disordered. Residues 2245–2307 (EASSQDMTAQ…VPGSPFQFTV (63 aa)) form a Filamin 20; mediates interaction with XIRP1 repeat. Filamin repeat units lie at residues 2310 to 2402 (LGEG…VVPV), 2404 to 2497 (SLSD…KIRV), and 2501 to 2593 (SQAG…KAKV). The interaction with INPPL1 stretch occupies residues 2404 to 2725 (SLSDDARRLT…VPGSPFKVNV (322 aa)). A phosphoserine mark is found at S2587, S2618, S2621, S2633, S2715, and S2719. The segment at 2594–2630 (TGPRLSGGHSLHETSTVLVETVTKSSSSRGASYSSIP) is hinge 2. Residues 2594–2726 (TGPRLSGGHS…PGSPFKVNVP (133 aa)) form a self-association site, tail region. The stretch at 2631–2725 (KFSSDASKVV…VPGSPFKVNV (95 aa)) is one Filamin 24 repeat.

This sequence belongs to the filamin family. In terms of assembly, homodimer; the filamin repeat 24 and the second hinge domain are important for dimer formation. Interacts with FLNB, KCND2, INPPL1, ITGB1A, MYOT, MYOZ1 and MYOZ3. Interacts with sarcoglycans SGCD and SGCG. Interacts (via filament repeats 17-18, 20-21 and 24) with USP25 (isoform USP25m only). Interacts with FBLIM1. Interacts with KY. Interacts with IGFN1. Interacts with MICALL2. Interacts with XIRP1; this interaction is mediated by filamin 20 repeat. Interacts with ANK3. Interacts with SYNPO2. In terms of processing, ubiquitinated by FBXL22, leading to proteasomal degradation.

Its subcellular location is the cytoplasm. It localises to the membrane. The protein localises to the cytoskeleton. It is found in the myofibril. The protein resides in the sarcomere. Its subcellular location is the z line. Muscle-specific filamin, which plays a central role in sarcomere assembly and organization. Critical for normal myogenesis, it probably functions as a large actin-cross-linking protein with structural functions at the Z lines in muscle cells. May be involved in reorganizing the actin cytoskeleton in response to signaling events. This chain is Filamin-C (Flnc), found in Rattus norvegicus (Rat).